Consider the following 95-residue polypeptide: Aspartyl/glutamyl-tRNA(Asn/Gln) amidotransferase subunit C (95 aa).

This sequence belongs to the GatC family. As to quaternary structure, heterotrimer of A, B and C subunits.

The enzyme catalyses L-glutamyl-tRNA(Gln) + L-glutamine + ATP + H2O = L-glutaminyl-tRNA(Gln) + L-glutamate + ADP + phosphate + H(+). It carries out the reaction L-aspartyl-tRNA(Asn) + L-glutamine + ATP + H2O = L-asparaginyl-tRNA(Asn) + L-glutamate + ADP + phosphate + 2 H(+). In terms of biological role, allows the formation of correctly charged Asn-tRNA(Asn) or Gln-tRNA(Gln) through the transamidation of misacylated Asp-tRNA(Asn) or Glu-tRNA(Gln) in organisms which lack either or both of asparaginyl-tRNA or glutaminyl-tRNA synthetases. The reaction takes place in the presence of glutamine and ATP through an activated phospho-Asp-tRNA(Asn) or phospho-Glu-tRNA(Gln). The sequence is that of Aspartyl/glutamyl-tRNA(Asn/Gln) amidotransferase subunit C from Pelobacter propionicus (strain DSM 2379 / NBRC 103807 / OttBd1).